A 387-amino-acid chain; its full sequence is Growth-regulating factor 3 (387 aa).

The region spanning 53 to 88 (PFTAAQYEELEQQALIYKYLVAGVPVPADLLLPIRR) is the QLQ domain. 2 consecutive short sequence motifs (bipartite nuclear localization signal) follow at residues 111–129 (KKLDPEPGRCRRTDGKKWR) and 147–154 (RGRNRSRK). Positions 114 to 158 (DPEPGRCRRTDGKKWRCSKEAAPDSKYCERHMHRGRNRSRKPVEA) constitute a WRC domain. Residues 145-176 (MHRGRNRSRKPVEAQLVAPHSQPPATAPAAAV) are disordered.

Belongs to the GRF family.

Its subcellular location is the nucleus. Transcription activator that plays a regulatory role in gibberellin-induced stem elongation. In Oryza sativa subsp. japonica (Rice), this protein is Growth-regulating factor 3 (GRF3).